The sequence spans 532 residues: Probable 1,4-beta-D-glucan cellobiohydrolase B (532 aa).

The N-terminal stretch at 1–26 is a signal peptide; it reads MLASTFSYRMYKTALILAALLGSGQA. The interval 27–461 is catalytic; sequence QQVGTSQAEV…SNIKVGPIGS (435 aa). Glu-238 serves as the catalytic Nucleophile. Glu-243 serves as the catalytic Proton donor. A glycan (N-linked (GlcNAc...) asparagine) is linked at Asn-296. Residues 462-495 form a disordered region; sequence TFNSGGSNPGGGTTTTTTTQPTTTTTTAGNPGGT. Residues 462–496 form a thr-rich linker region; sequence TFNSGGSNPGGGTTTTTTTQPTTTTTTAGNPGGTG. The segment covering 475–490 has biased composition (low complexity); the sequence is TTTTTTQPTTTTTTAG. Positions 496–532 constitute a CBM1 domain; sequence GVAQHYGQCGGIGWTGPTTCASPYTCQKLNDYYSQCL. 2 disulfides stabilise this stretch: Cys-504-Cys-521 and Cys-515-Cys-531.

The protein belongs to the glycosyl hydrolase 7 (cellulase C) family.

It is found in the secreted. The enzyme catalyses Hydrolysis of (1-&gt;4)-beta-D-glucosidic linkages in cellulose and cellotetraose, releasing cellobiose from the non-reducing ends of the chains.. Its function is as follows. The biological conversion of cellulose to glucose generally requires three types of hydrolytic enzymes: (1) Endoglucanases which cut internal beta-1,4-glucosidic bonds; (2) Exocellobiohydrolases that cut the disaccharide cellobiose from the non-reducing end of the cellulose polymer chain; (3) Beta-1,4-glucosidases which hydrolyze the cellobiose and other short cello-oligosaccharides to glucose. This Aspergillus fumigatus (strain CBS 144.89 / FGSC A1163 / CEA10) (Neosartorya fumigata) protein is Probable 1,4-beta-D-glucan cellobiohydrolase B (cbhB).